Consider the following 970-residue polypeptide: Translation initiation factor IF-2 (970 aa).

Disordered regions lie at residues 54-270 and 328-348; these read KILA…TATQ and DKRR…KSLS. Residues 87 to 96 are compositionally biased toward low complexity; sequence QEAQPVEAQP. Positions 98 to 112 are enriched in polar residues; it reads YEEQPSYEEQPSYEE. Residues 121-149 are compositionally biased toward low complexity; sequence EVAAEAAPEPVEEPASSPEGGAPAGGAEP. Pro residues-rich tracts occupy residues 150 to 160 and 168 to 182; these read QPAPEAPPPSA and PSAP…PAPS. Over residues 183-253 the composition is skewed to low complexity; the sequence is VPAGAQPPGA…PHGPGAQPGQ (71 aa). Residues 469–638 enclose the tr-type G domain; the sequence is IRPPVVTVMG…ALQSEVLELK (170 aa). The segment at 478–485 is G1; the sequence is GHVDHGKT. 478–485 is a GTP binding site; it reads GHVDHGKT. The segment at 503 to 507 is G2; that stretch reads GITQH. The segment at 524–527 is G3; sequence DTPG. GTP-binding positions include 524 to 528 and 578 to 581; these read DTPGH and NKID. The tract at residues 578–581 is G4; sequence NKID. Residues 614 to 616 are G5; the sequence is SAR.

This sequence belongs to the TRAFAC class translation factor GTPase superfamily. Classic translation factor GTPase family. IF-2 subfamily.

It is found in the cytoplasm. One of the essential components for the initiation of protein synthesis. Protects formylmethionyl-tRNA from spontaneous hydrolysis and promotes its binding to the 30S ribosomal subunits. Also involved in the hydrolysis of GTP during the formation of the 70S ribosomal complex. This is Translation initiation factor IF-2 from Anaeromyxobacter sp. (strain Fw109-5).